A 227-amino-acid polypeptide reads, in one-letter code: Cytochrome c oxidase subunit 2 (227 aa).

Topologically, residues 1–14 (MAHAAQVGLQDATS) are mitochondrial intermembrane. A helical transmembrane segment spans residues 15 to 45 (PIMEELITFHDHALMIIFLICFLVLYALFLT). The Mitochondrial matrix segment spans residues 46–59 (LTTKLTSTNISDAQ). Residues 60-87 (EMETIWTILPAIILVLIALPSLRILYMT) traverse the membrane as a helical segment. Residues 88–227 (DEINDPSFTI…IFEMGPVFAL (140 aa)) are Mitochondrial intermembrane-facing. Residues His-161, Cys-196, Glu-198, Cys-200, His-204, and Met-207 each coordinate Cu cation. Glu-198 is a Mg(2+) binding site.

Belongs to the cytochrome c oxidase subunit 2 family. As to quaternary structure, component of the cytochrome c oxidase (complex IV, CIV), a multisubunit enzyme composed of 14 subunits. The complex is composed of a catalytic core of 3 subunits MT-CO1, MT-CO2 and MT-CO3, encoded in the mitochondrial DNA, and 11 supernumerary subunits COX4I, COX5A, COX5B, COX6A, COX6B, COX6C, COX7A, COX7B, COX7C, COX8 and NDUFA4, which are encoded in the nuclear genome. The complex exists as a monomer or a dimer and forms supercomplexes (SCs) in the inner mitochondrial membrane with NADH-ubiquinone oxidoreductase (complex I, CI) and ubiquinol-cytochrome c oxidoreductase (cytochrome b-c1 complex, complex III, CIII), resulting in different assemblies (supercomplex SCI(1)III(2)IV(1) and megacomplex MCI(2)III(2)IV(2)). Found in a complex with TMEM177, COA6, COX18, COX20, SCO1 and SCO2. Interacts with TMEM177 in a COX20-dependent manner. Interacts with COX20. Interacts with COX16. It depends on Cu cation as a cofactor.

It localises to the mitochondrion inner membrane. It catalyses the reaction 4 Fe(II)-[cytochrome c] + O2 + 8 H(+)(in) = 4 Fe(III)-[cytochrome c] + 2 H2O + 4 H(+)(out). In terms of biological role, component of the cytochrome c oxidase, the last enzyme in the mitochondrial electron transport chain which drives oxidative phosphorylation. The respiratory chain contains 3 multisubunit complexes succinate dehydrogenase (complex II, CII), ubiquinol-cytochrome c oxidoreductase (cytochrome b-c1 complex, complex III, CIII) and cytochrome c oxidase (complex IV, CIV), that cooperate to transfer electrons derived from NADH and succinate to molecular oxygen, creating an electrochemical gradient over the inner membrane that drives transmembrane transport and the ATP synthase. Cytochrome c oxidase is the component of the respiratory chain that catalyzes the reduction of oxygen to water. Electrons originating from reduced cytochrome c in the intermembrane space (IMS) are transferred via the dinuclear copper A center (CU(A)) of subunit 2 and heme A of subunit 1 to the active site in subunit 1, a binuclear center (BNC) formed by heme A3 and copper B (CU(B)). The BNC reduces molecular oxygen to 2 water molecules using 4 electrons from cytochrome c in the IMS and 4 protons from the mitochondrial matrix. The chain is Cytochrome c oxidase subunit 2 (MT-CO2) from Gorilla gorilla gorilla (Western lowland gorilla).